The following is a 199-amino-acid chain: Small ribosomal subunit protein uS14m (199 aa).

The tract at residues 28 to 67 is disordered; it reads LSTPAPEPAKPSSEETTESTEPATSVEDAGEPMKEKRITQ.

Belongs to the universal ribosomal protein uS14 family. In terms of assembly, component of the mitochondrial ribosome small subunit (28S) which comprises a 12S rRNA and about 30 distinct proteins. Interacts with LIAT1.

It localises to the mitochondrion. This is Small ribosomal subunit protein uS14m (mrps-14) from Caenorhabditis elegans.